A 1687-amino-acid chain; its full sequence is Genome polyprotein (1687 aa).

Residues 1 to 13 show a composition bias toward polar residues; sequence MRMATPSSAPSVR. Positions 1-56 are disordered; the sequence is MRMATPSSAPSVRNTEKRKNKKASSKASVSFGAPSPLSSESEDEINYMTPPEQEAQ. The tract at residues 1–116 is interaction with host MAP1LC3A/LC3; sequence MRMATPSSAP…FRRYPHLRPK (116 aa). Residues 117-341 form an interaction with NTPase region; the sequence is EDRPDAPSHA…ISIFGEWQAE (225 aa). The interaction with NS4 stretch occupies residues 244–341; sequence SPVQDWNVDP…ISIFGEWQAE (98 aa). 2 host ER membrane association regions span residues 261–292 and 302–341; these read KLRM…KPLN and WTFS…WQAE. The interval 342 to 518 is interaction with NS1-2, NS4 and homooligomerization; sequence GPFDLALDVV…GKTCFCQNLA (177 aa). The SF3 helicase domain occupies 476–641; it reads RISMARAAFE…DDARARAPGD (166 aa). Position 504-511 (504-511) interacts with ATP; that stretch reads GRPGIGKT. An important for mitochondrion targeting region spans residues 595–700; sequence VIIITTNQQT…AVALVHERHD (106 aa). Residues 893–898 are acidic; it reads DEEYDE. Tyr-896 bears the O-(5'-phospho-RNA)-tyrosine mark. The tract at residues 978–994 is interaction with host EIF4G; the sequence is WADDDRQVDYGEKINFE. Residues 995 to 1172 form the Peptidase C37 domain; it reads APVSIWSRVV…AATHGEPTLE (178 aa). Residues His-1024, Asp-1048, and Cys-1133 each act as for 3CLpro activity in the active site. The RdRp catalytic domain occupies 1416–1537; it reads RYHMDADYTR…STNLELDMVK (122 aa). Residues Asp-1420 and Asp-1422 each contribute to the Mg(2+) site. A disulfide bridge connects residues Cys-1482 and Cys-1484. Mg(2+)-binding residues include Asp-1524, Glu-1525, and Ser-1569.

As to quaternary structure, homodimer. Interacts with NTPase; this interaction increases the proapoptotic activity of the NTPase and is crucial for the formation of the viral replication complex. Interacts with NS4; this interaction is crucial for the formation of the viral replication complex. Interacts (via N-terminus) with host VAPA. Interacts with host VAPB. In terms of assembly, monomer. Homooligomer. Interacts with NS1-2; this interaction increases the proapoptotic activity of the NTPase and is crucial for the formation of the viral replication complex. Interacts with NS4; this interaction increases the proapoptotic activity of the NTPase. Interacts with host G3BP1; this interaction leads to the redistribution of G3BP1 and its cellular partners to the viral replication complexes, thereby preventing the assembly of stress granules. As to quaternary structure, homodimer. Monomer; in solution. In terms of assembly, interacts with NTPase; this interaction increases the proapoptotic activity of the NTPase. Interacts with NS1-2; this interaction is crucial for the formation of the viral replication complex. Monomer. Interacts with the RNA-directed RNA polymerase; this interaction induces the multimerization of the RdRp and enhances its activity. Interacts with host IEF4E; this interaction plays a role in translation of viral proteins. Interacts (via C-terminus) with host IEF4G1 (via central domain); this interaction plays a role in translation of viral proteins. As to quaternary structure, homohexamer; also forms fibrous hexameric oligomer. Interacts with the viral genome-linked protein; this interaction induces the multimerization of the RdRp and enhances its activity. It depends on Mg(2+) as a cofactor. Requires Mn(2+) as cofactor. Specific enzymatic cleavages in vivo yield mature proteins. 3CLpro is first autocatalytically cleaved, then processes the whole polyprotein. In terms of processing, cleaved by host CASP3/caspase 3 at 18-22 h.p.i. The cleavage allows NS1 secretion, which is essential for intestinal infection and resistance to IFN-lambda. Post-translationally, VPg is uridylylated by the polymerase and is covalently attached to the 5'-end of the polyadenylated genomic and subgenomic RNAs. This uridylylated form acts as a nucleotide-peptide primer for the polymerase.

Its subcellular location is the host endoplasmic reticulum membrane. The protein localises to the secreted. It is found in the host endosome membrane. It localises to the host mitochondrion. The protein resides in the host cytoplasm. Its subcellular location is the host perinuclear region. The catalysed reaction is a ribonucleoside 5'-triphosphate + H2O = a ribonucleoside 5'-diphosphate + phosphate + H(+). The enzyme catalyses Endopeptidase with a preference for cleavage when the P1 position is occupied by Glu-|-Xaa and the P1' position is occupied by Gly-|-Yaa.. It carries out the reaction RNA(n) + a ribonucleoside 5'-triphosphate = RNA(n+1) + diphosphate. Its activity is regulated as follows. Inhibited by Suramin, Suramin-related compounds and NF023. Inhibited by PPNDS. In terms of biological role, induces the proliferation of the host smooth ER membranes forming long tubular structures. These remodeled membranes probably form the viral factories that contain the replication complex. May play a role in viral replication by interacting with host VAPA, a vesicle-associated membrane protein that plays a role in SNARE-mediated vesicle fusion. This interaction may target replication complex to intracellular membranes. Its function is as follows. Promotes intestinal tropism and persistent fecal shedding in strain CR6. This function requires Glu-94 and is present in persistant strains. Displays NTPase activity, but probably no helicase activity. Displays RNA chaperone-like activity and destabilizes dsRNA. Induces the formation of convoluted membranes derived from the host ER. These remodeled membranes probably form the viral factories that contain the replication complex. Initiates host cell death by targeting the mitochondrial outer membrane, leading to the permeabilization of mitochondria, programmed host cell death and viral egress. Externalization of host cardiolipin seems to be involved in the process. Probably plays a role in preventing the assembly of host stress granules. Functionally, probable key protein responsible for the formation of membrane alterations by the virus. Induces the formation of convoluted membranes derived from the host ER. These remodeled membranes probably form the viral factories that contain the replication complex. May play a role in targeting replication complex to intracellular membranes. In terms of biological role, viral genome-linked protein is covalently linked to the 5'-end of the positive-strand, negative-strand genomic RNAs and subgenomic RNA. Acts as a genome-linked replication primer. May recruit ribosome to viral RNA thereby promoting viral proteins translation. Interacts with host translation initiation complex to allow the translation of viral proteins. Induces the formation of aggregates of RNA-directed RNA polymerase in the presence of RNA. Through its interaction with the viral RNA-directed RNA polymerase, plays a crucial role in enhancing the polymerase activity. Its function is as follows. Processes the polyprotein. 3CLpro-RdRp is first released by autocleavage, then all other proteins are cleaved. May cleave host polyadenylate-binding protein thereby inhibiting cellular translation. Does not cleave host G3BP1. Replicates genomic and antigenomic RNA by recognizing replications specific signals. Also transcribes a subgenomic mRNA by initiating RNA synthesis internally on antigenomic RNA. This sgRNA codes for structural proteins. Catalyzes the covalent attachment VPg with viral RNAs. The chain is Genome polyprotein from Norovirus (isolate Mouse/NoV/United States/MNV1/2002/GV) (MNV-1).